Here is a 631-residue protein sequence, read N- to C-terminus: Phosphomethylpyrimidine synthase (631 aa).

Residues Asn239, Met268, Tyr297, His333, 353–355, 394–397, and Glu433 each bind substrate; these read SRG and DGLR. His437 contributes to the Zn(2+) binding site. Tyr460 provides a ligand contact to substrate. His501 is a binding site for Zn(2+). Cys581, Cys584, and Cys589 together coordinate [4Fe-4S] cluster.

Belongs to the ThiC family. In terms of assembly, homodimer. [4Fe-4S] cluster serves as cofactor.

It catalyses the reaction 5-amino-1-(5-phospho-beta-D-ribosyl)imidazole + S-adenosyl-L-methionine = 4-amino-2-methyl-5-(phosphooxymethyl)pyrimidine + CO + 5'-deoxyadenosine + formate + L-methionine + 3 H(+). The protein operates within cofactor biosynthesis; thiamine diphosphate biosynthesis. Functionally, catalyzes the synthesis of the hydroxymethylpyrimidine phosphate (HMP-P) moiety of thiamine from aminoimidazole ribotide (AIR) in a radical S-adenosyl-L-methionine (SAM)-dependent reaction. The protein is Phosphomethylpyrimidine synthase of Escherichia fergusonii (strain ATCC 35469 / DSM 13698 / CCUG 18766 / IAM 14443 / JCM 21226 / LMG 7866 / NBRC 102419 / NCTC 12128 / CDC 0568-73).